The following is a 456-amino-acid chain: Exodeoxyribonuclease 7 large subunit (456 aa).

Belongs to the XseA family. As to quaternary structure, heterooligomer composed of large and small subunits.

It localises to the cytoplasm. The enzyme catalyses Exonucleolytic cleavage in either 5'- to 3'- or 3'- to 5'-direction to yield nucleoside 5'-phosphates.. Its function is as follows. Bidirectionally degrades single-stranded DNA into large acid-insoluble oligonucleotides, which are then degraded further into small acid-soluble oligonucleotides. The protein is Exodeoxyribonuclease 7 large subunit of Azotobacter vinelandii (strain DJ / ATCC BAA-1303).